The chain runs to 211 residues: Shikimate kinase (211 aa).

The segment covering 1-13 (MNASANLCAASAN) has biased composition (low complexity). Positions 1–24 (MNASANLCAASANDPQPGDQEAAH) are disordered. 50–55 (GAGKTT) lines the ATP pocket. Mg(2+) is bound at residue Thr54. Asp72, Arg96, and Gly118 together coordinate substrate. Arg156 contributes to the ATP binding site. Arg175 provides a ligand contact to substrate.

Belongs to the shikimate kinase family. In terms of assembly, monomer. Mg(2+) is required as a cofactor.

It localises to the cytoplasm. The enzyme catalyses shikimate + ATP = 3-phosphoshikimate + ADP + H(+). Its pathway is metabolic intermediate biosynthesis; chorismate biosynthesis; chorismate from D-erythrose 4-phosphate and phosphoenolpyruvate: step 5/7. Catalyzes the specific phosphorylation of the 3-hydroxyl group of shikimic acid using ATP as a cosubstrate. This Bordetella parapertussis (strain 12822 / ATCC BAA-587 / NCTC 13253) protein is Shikimate kinase.